The primary structure comprises 1035 residues: Integrin alpha-9 (1035 aa).

The signal sequence occupies residues 1–29 (MGGPAAPRGAGRLRALLLALVVAGIPAGA). The Extracellular portion of the chain corresponds to 30 to 981 (YNLDPQRPVH…LEPRGYVVGW (952 aa)). 7 FG-GAP repeats span residues 35-96 (QRPV…PDRR), 111-174 (SCGK…AKGR), 182-232 (EYKK…NTYL), 233-289 (KLND…SGTL), 290-349 (IKIF…GALE), 351-408 (QLAL…GIVP), and 411-474 (SMKL…LPGS). 3 disulfide bridges follow: C87-C97, C142-C162, and C179-C194. N225 carries an N-linked (GlcNAc...) asparagine glycan. 12 residues coordinate Ca(2+): D312, N314, D316, D320, D373, D375, D377, D381, D435, D437, N439, and D443. A glycan (N-linked (GlcNAc...) asparagine) is linked at N476. C482 and C491 form a disulfide bridge. N493 is a glycosylation site (N-linked (GlcNAc...) asparagine). C497 and C555 are joined by a disulfide. N612 is a glycosylation site (N-linked (GlcNAc...) asparagine). An intrachain disulfide couples C620 to C625. Residues N654, N658, N672, and N676 are each glycosylated (N-linked (GlcNAc...) asparagine). C696 and C706 are joined by a disulfide. Residues N807 and N854 are each glycosylated (N-linked (GlcNAc...) asparagine). Cystine bridges form between C855–C891 and C898–C903. N904 is a glycosylation site (N-linked (GlcNAc...) asparagine). The chain crosses the membrane as a helical span at residues 982–1002 (IIAISLLVGILIFLLLAVLLW). The Cytoplasmic segment spans residues 1003 to 1035 (KMGFFRRRYKEIIEAEKNRKENEDSWDWVQKNQ). The GFFKR motif motif lies at 1005-1009 (GFFRR).

It belongs to the integrin alpha chain family. As to quaternary structure, heterodimer of an alpha and a beta subunit. Alpha-9 (ITGA9) associates with beta-1 (ITGB1). Integrin ITGA9:ITGB1 interacts with FBLN5 (via N-terminus). Integrin ITGA9:ITGB1 interacts with SPP1/OPN (via N-terminus). Integrin ITGA9:ITGB1 interacts with TNC/TNFN3 (via the 3rd Fibronectin type-III domain). Integrin ITGA9:ITGB1 interacts with SVEP1/polydom (via Sushi domain 21); thereby inhibits Ca(2+) intracellular signaling and as a result represses vasocontraction. In terms of tissue distribution, expressed in vascular smooth muscle cells (at protein level). Expressed in the airway epithelium (at protein level).

Its subcellular location is the membrane. Its function is as follows. Integrin alpha-9/beta-1 (ITGA9:ITGB1) is a receptor for VCAM1, cytotactin and osteopontin. It recognizes the sequence A-E-I-D-G-I-E-L in cytotactin. ITGA9:ITGB1 may play a crucial role in SVEP1/polydom-mediated myoblast cell adhesion. Integrin ITGA9:ITGB1 represses PRKCA-mediated L-type voltage-gated channel Ca(2+) influx and ROCK-mediated calcium sensitivity in vascular smooth muscle cells via its interaction with SVEP1, thereby inhibiting vasocontraction. The polypeptide is Integrin alpha-9 (ITGA9) (Homo sapiens (Human)).